The primary structure comprises 429 residues: tRNA-2-methylthio-N(6)-dimethylallyladenosine synthase (429 aa).

An MTTase N-terminal domain is found at 2 to 115; sequence KLLYLQTLGC…ISEAVKTPKF (114 aa). [4Fe-4S] cluster is bound by residues cysteine 11, cysteine 46, cysteine 78, cysteine 147, cysteine 151, and cysteine 154. A Radical SAM core domain is found at 133 to 365; it reads RGSPYKAFVN…QSRHNEILDE (233 aa). The TRAM domain maps to 368–429; that stretch reads KNQVGKIFDV…RMVLYGKITA (62 aa).

This sequence belongs to the methylthiotransferase family. MiaB subfamily. Monomer. It depends on [4Fe-4S] cluster as a cofactor.

The protein resides in the cytoplasm. The enzyme catalyses N(6)-dimethylallyladenosine(37) in tRNA + (sulfur carrier)-SH + AH2 + 2 S-adenosyl-L-methionine = 2-methylsulfanyl-N(6)-dimethylallyladenosine(37) in tRNA + (sulfur carrier)-H + 5'-deoxyadenosine + L-methionine + A + S-adenosyl-L-homocysteine + 2 H(+). Catalyzes the methylthiolation of N6-(dimethylallyl)adenosine (i(6)A), leading to the formation of 2-methylthio-N6-(dimethylallyl)adenosine (ms(2)i(6)A) at position 37 in tRNAs that read codons beginning with uridine. The protein is tRNA-2-methylthio-N(6)-dimethylallyladenosine synthase of Campylobacter hominis (strain ATCC BAA-381 / DSM 21671 / CCUG 45161 / LMG 19568 / NCTC 13146 / CH001A).